The primary structure comprises 177 residues: PBAN-type neuropeptides (177 aa).

Residues 1–23 (MIVTGNPVCAIALLLCLVFRASG) form the signal peptide. Residues 24-54 (EYELEMSSGGSNDGRSPSNDFGSCTDGKCTK) constitute a propeptide that is removed on maturation. Residues 28-73 (EMSSGGSNDGRSPSNDFGSCTDGKCTKRTTTTQESGISSGMWFGPR) form a disordered region. Residues 31–45 (SGGSNDGRSPSNDFG) are compositionally biased toward polar residues. A compositionally biased stretch (low complexity) spans 47 to 59 (CTDGKCTKRTTTT). Leucine amide is present on leucine 74. Positions 78–113 (HKSNEKQQINPEIEMLVNALDQPGMRWTVITIPANE) are excised as a propeptide. Leucine amide occurs at positions 124, 154, and 166. A propeptide spanning residues 169-177 (QSRSVSRKI) is cleaved from the precursor.

The protein belongs to the pyrokinin family. As to expression, pyrokinins (PK) 1 to 4 are expressed in the retrocerebral complex. PK 1 is expressed in central brain, anntennal lobes and abominal ganglia. PK 2 is expressed in optical lobes and in gnathal, thoracic and abdominal ganglia. PK 3 is expressed in optical lobes and in thoracic and abdominal ganglia (at protein level).

It localises to the secreted. Pyrokinins mediate visceral muscle contractile activity (myotropic activity). The polypeptide is PBAN-type neuropeptides (Camponotus floridanus (Florida carpenter ant)).